Consider the following 78-residue polypeptide: D-alanyl carrier protein (78 aa).

Residues 1 to 78 (MEFREQVLDL…KIVEVLEELR (78 aa)) form the Carrier domain. Position 36 is an O-(pantetheine 4'-phosphoryl)serine (Ser-36).

The protein belongs to the DltC family. Post-translationally, 4'-phosphopantetheine is transferred from CoA to a specific serine of apo-DCP.

It localises to the cytoplasm. It participates in cell wall biogenesis; lipoteichoic acid biosynthesis. In terms of biological role, carrier protein involved in the D-alanylation of lipoteichoic acid (LTA). The loading of thioester-linked D-alanine onto DltC is catalyzed by D-alanine--D-alanyl carrier protein ligase DltA. The DltC-carried D-alanyl group is further transferred to cell membrane phosphatidylglycerol (PG) by forming an ester bond, probably catalyzed by DltD. D-alanylation of LTA plays an important role in modulating the properties of the cell wall in Gram-positive bacteria, influencing the net charge of the cell wall. The sequence is that of D-alanyl carrier protein from Staphylococcus xylosus.